We begin with the raw amino-acid sequence, 172 residues long: Type IV secretion system putative outer membrane lipoprotein BRA0058/BS1330_II0058 (172 aa).

The N-terminal stretch at 1-15 is a signal peptide; sequence MRTLVMVACAVSLAA. Cys16 carries the N-palmitoyl cysteine lipid modification. A lipid anchor (S-diacylglycerol cysteine) is attached at Cys16. An OmpA-like domain is found at 58 to 172; the sequence is WPARPPKQTV…RRVDIEILRK (115 aa).

The protein resides in the cell outer membrane. In terms of biological role, the VirB system could be required for the establishment of the replication niche in the host. This is Type IV secretion system putative outer membrane lipoprotein BRA0058/BS1330_II0058 from Brucella suis biovar 1 (strain 1330).